A 509-amino-acid chain; its full sequence is Methylmalonyl-CoA decarboxylase subunit alpha (509 aa).

The CoA carboxyltransferase N-terminal domain occupies 4–260 (VQEKIELLHE…NNMEDAPLVD (257 aa)). The CoA carboxyltransferase C-terminal domain maps to 267 to 503 (REDESLNSLL…SKRENRAPKK (237 aa)).

This sequence belongs to the AccD/PCCB family. The methylmalonyl-CoA decarboxylase is composed of five subunits: the carboxyltransferase alpha subunit (MmdA), the tunnel beta subunit (MmdB), the biotin-containing gamma subunit (MmdC), and the delta (MmdD) and epsilon (MmdE) subunits. Interacts with the gamma subunit.

The protein localises to the cell membrane. The catalysed reaction is (S)-methylmalonyl-CoA + Na(+)(in) + H(+)(out) = propanoyl-CoA + Na(+)(out) + CO2. With respect to regulation, completely inhibited by avidin. Carboxyltransferase subunit of the sodium ion pump methylmalonyl-CoA decarboxylase, which converts the chemical energy of a decarboxylation reaction into an electrochemical gradient of Na(+) ions across the cytoplasmic membrane, thereby creating a sodium ion motive force that is used for ATP synthesis. The alpha subunit catalyzes the Na(+)-independent carboxyltransfer from methylmalonyl-CoA to the prosthetic biotin group located on the gamma subunit. Can also convert malonyl-CoA into acetyl-CoA. This Veillonella parvula (Staphylococcus parvulus) protein is Methylmalonyl-CoA decarboxylase subunit alpha.